The sequence spans 179 residues: Large ribosomal subunit protein uL5 (179 aa).

It belongs to the universal ribosomal protein uL5 family. Part of the 50S ribosomal subunit; part of the 5S rRNA/L5/L18/L25 subcomplex. Contacts the 5S rRNA and the P site tRNA. Forms a bridge to the 30S subunit in the 70S ribosome.

In terms of biological role, this is one of the proteins that bind and probably mediate the attachment of the 5S RNA into the large ribosomal subunit, where it forms part of the central protuberance. In the 70S ribosome it contacts protein S13 of the 30S subunit (bridge B1b), connecting the 2 subunits; this bridge is implicated in subunit movement. Contacts the P site tRNA; the 5S rRNA and some of its associated proteins might help stabilize positioning of ribosome-bound tRNAs. This is Large ribosomal subunit protein uL5 from Staphylococcus haemolyticus (strain JCSC1435).